The sequence spans 589 residues: Protein NRT1/ PTR FAMILY 7.2 (589 aa).

A run of 2 helical transmembrane segments spans residues 32–52 (WLTA…FFGV) and 78–98 (WTGT…SYWG). A Phosphothreonine modification is found at Thr102. 10 helical membrane-spanning segments follow: residues 105-125 (IFQA…GALL), 147-167 (VLFY…QPNI), 187-207 (IAFF…SNTV), 217-237 (WPLG…LFLI), 343-363 (IWLC…LFVV), 377-397 (IPAS…IFAY), 423-443 (MGIG…VEIH), 464-484 (IFWQ…MYVG), 504-524 (LCMA…SIVM), and 548-568 (FYFL…ICAK).

It belongs to the major facilitator superfamily. Proton-dependent oligopeptide transporter (POT/PTR) (TC 2.A.17) family. In terms of tissue distribution, expressed in xylem parenchyma cells within the vasculature. Expressed in siliques and flowers. Higher expression in shoots than in roots.

It localises to the cell membrane. Functionally, low-affinity nitrate transporter. Involved in nitrate removal from xylem sap. Not involved in oligopeptides transport. The sequence is that of Protein NRT1/ PTR FAMILY 7.2 (NPF7.2) from Arabidopsis thaliana (Mouse-ear cress).